The primary structure comprises 387 residues: Capsid protein (387 aa).

Over residues 1-33 the composition is skewed to basic residues; that stretch reads MARTKSKPRKRTTVRKARRSVKRRTTTKGTKRK. 2 disordered regions span residues 1–47 and 365–387; these read MART…RGVA and KSAK…REFN. 2 consecutive short sequence motifs (nuclear localization signal) follow at residues 8–15 and 30–37; these read PRKRTTVR and TKRKTAGD. Positions 370–379 are enriched in low complexity; that stretch reads NDQLNNNQDA.

It is found in the host nucleus. It localises to the virion. In terms of biological role, self-assembles to form the virion icosahedral capsid. This chain is Capsid protein, found in Chaetoceros protobacilladnavirus 2 (Chaetoceros sp. DNA virus 7).